A 251-amino-acid chain; its full sequence is Ubiquinone/menaquinone biosynthesis C-methyltransferase UbiE (251 aa).

S-adenosyl-L-methionine contacts are provided by residues Thr-74, Asp-95, and 123 to 124; that span reads NA.

Belongs to the class I-like SAM-binding methyltransferase superfamily. MenG/UbiE family.

The catalysed reaction is a 2-demethylmenaquinol + S-adenosyl-L-methionine = a menaquinol + S-adenosyl-L-homocysteine + H(+). It carries out the reaction a 2-methoxy-6-(all-trans-polyprenyl)benzene-1,4-diol + S-adenosyl-L-methionine = a 5-methoxy-2-methyl-3-(all-trans-polyprenyl)benzene-1,4-diol + S-adenosyl-L-homocysteine + H(+). It functions in the pathway quinol/quinone metabolism; menaquinone biosynthesis; menaquinol from 1,4-dihydroxy-2-naphthoate: step 2/2. The protein operates within cofactor biosynthesis; ubiquinone biosynthesis. In terms of biological role, methyltransferase required for the conversion of demethylmenaquinol (DMKH2) to menaquinol (MKH2) and the conversion of 2-polyprenyl-6-methoxy-1,4-benzoquinol (DDMQH2) to 2-polyprenyl-3-methyl-6-methoxy-1,4-benzoquinol (DMQH2). The polypeptide is Ubiquinone/menaquinone biosynthesis C-methyltransferase UbiE (Shewanella oneidensis (strain ATCC 700550 / JCM 31522 / CIP 106686 / LMG 19005 / NCIMB 14063 / MR-1)).